We begin with the raw amino-acid sequence, 221 residues long: PKHD-type hydroxylase NATL1_16191 (221 aa).

The Fe2OG dioxygenase domain maps to L80–S174. Fe cation-binding residues include H98, D100, and H155. R165 provides a ligand contact to 2-oxoglutarate.

It depends on Fe(2+) as a cofactor. The cofactor is L-ascorbate.

This is PKHD-type hydroxylase NATL1_16191 from Prochlorococcus marinus (strain NATL1A).